A 214-amino-acid chain; its full sequence is Vascular endothelial growth factor A (214 aa).

The N-terminal stretch at 1–26 (MNFLLSWVHWSLALLLYLHHAKWSQA) is a signal peptide. 3 disulfides stabilise this stretch: cysteine 51-cysteine 93, cysteine 82-cysteine 127, and cysteine 86-cysteine 129. A glycan (N-linked (GlcNAc...) asparagine) is linked at asparagine 100. Basic and acidic residues predominate over residues 131–142 (PKKDRARQEKKS). Residues 131 to 162 (PKKDRARQEKKSIRGKGKGQKRKRKKSRYKPW) are disordered. Residues 143–159 (IRGKGKGQKRKRKKSRY) show a composition bias toward basic residues.

The protein belongs to the PDGF/VEGF growth factor family. In terms of assembly, homodimer; disulfide-linked. Also found as heterodimer with PGF. Interacts with NRP1. Interacts with BSG. Interacts with CD82; this interaction inhibits VEGFA-mediated signaling pathway.

The protein localises to the secreted. Growth factor active in angiogenesis, vasculogenesis and endothelial cell growth. Induces endothelial cell proliferation, promotes cell migration, inhibits apoptosis and induces permeabilization of blood vessels. Binds to the FLT1/VEGFR1 and KDR/VEGFR2 receptors, heparan sulfate and heparin. Binding to NRP1 receptor initiates a signaling pathway needed for motor neuron axon guidance and cell body migration, including for the caudal migration of facial motor neurons from rhombomere 4 to rhombomere 6 during embryonic development. Also binds the DEAR/FBXW7-AS1 receptor. The protein is Vascular endothelial growth factor A (VEGFA) of Canis lupus familiaris (Dog).